The following is a 357-amino-acid chain: D-alanine--D-alanine ligase A (357 aa).

In terms of domain architecture, ATP-grasp spans K143–E348. A171–E226 lines the ATP pocket. Residues D302, E315, and N317 each contribute to the Mg(2+) site.

The protein belongs to the D-alanine--D-alanine ligase family. It depends on Mg(2+) as a cofactor. The cofactor is Mn(2+).

It is found in the cytoplasm. The catalysed reaction is 2 D-alanine + ATP = D-alanyl-D-alanine + ADP + phosphate + H(+). Its pathway is cell wall biogenesis; peptidoglycan biosynthesis. Functionally, cell wall formation. In Mesorhizobium japonicum (strain LMG 29417 / CECT 9101 / MAFF 303099) (Mesorhizobium loti (strain MAFF 303099)), this protein is D-alanine--D-alanine ligase A.